We begin with the raw amino-acid sequence, 274 residues long: Pyridoxal phosphate homeostasis protein (274 aa).

Ser6 carries the phosphoserine modification. Lys47 is modified (N6-(pyridoxal phosphate)lysine). Phosphotyrosine is present on Tyr69. An N6-succinyllysine modification is found at Lys125. 2 positions are modified to phosphoserine: Ser226 and Ser244.

The protein belongs to the pyridoxal phosphate-binding protein YggS/PROSC family.

Pyridoxal 5'-phosphate (PLP)-binding protein, which may be involved in intracellular homeostatic regulation of pyridoxal 5'-phosphate (PLP), the active form of vitamin B6. The polypeptide is Pyridoxal phosphate homeostasis protein (Mus musculus (Mouse)).